The following is a 343-amino-acid chain: Palmitoyltransferase ZDHHC4 (343 aa).

Over 1-2 (MD) the chain is Lumenal. Residues 3–23 (FLVLFLLYLALVLLGFVMICI) traverse the membrane as a helical segment. The Cytoplasmic portion of the chain corresponds to 24 to 67 (GSKTHYLQGLISRGAQVFSYIIPECLQRAMLSVLHYLFHTRNYT). A helical membrane pass occupies residues 68-88 (FVVLHLILQGMVYTEYTWEIF). Topologically, residues 89–95 (GLCQQLE) are lumenal. Residues 96-116 (FSLYYLFLPYLLLIVNLLFFT) traverse the membrane as a helical segment. The Cytoplasmic portion of the chain corresponds to 117-196 (LSCVTNPGTI…GAWNTRYFLS (80 aa)). Residues 149–199 (VRCPTCDLRKPARSKHCSVCNRCVHRFDHHCVWVNNCIGAWNTRYFLSYLF) form the DHHC domain. The active-site S-palmitoyl cysteine intermediate is the Cys-179. The helical transmembrane segment at 197–217 (YLFTLTASAATMAVVSTVFLV) threads the bilayer. Residues 218–255 (RLVVMSDVYLQTYVDDLGHLQVVDTVFLVQYLFLTFPR) lie on the Lumenal side of the membrane. A helical membrane pass occupies residues 256 to 276 (IVFLVGFVVVLSFLLGGYLCF). At 277–343 (CLYLAATNQT…ATACYERKEK (67 aa)) the chain is on the cytoplasmic side. Residues 340-343 (RKEK) carry the Di-lysine motif motif.

It belongs to the DHHC palmitoyltransferase family. In terms of assembly, interacts with CPT1A.

Its subcellular location is the endoplasmic reticulum membrane. The protein resides in the golgi apparatus membrane. It localises to the cell membrane. It carries out the reaction L-cysteinyl-[protein] + hexadecanoyl-CoA = S-hexadecanoyl-L-cysteinyl-[protein] + CoA. Palmitoyltransferase that could catalyze the addition of palmitate onto protein substrates including the D(2) dopamine receptor DRD2, GSK3B or MAVS. Mediates GSK3B palmitoylation to prevent its AKT1-mediated phosphorylation leading to activation of the STAT3 signaling pathway. Also catalyzes MAVS palmitoylation which promotes its stabilization and activation by inhibiting 'Lys-48'- but facilitating 'Lys-63'-linked ubiquitination. In Bos taurus (Bovine), this protein is Palmitoyltransferase ZDHHC4.